We begin with the raw amino-acid sequence, 634 residues long: Serine/threonine kinase NLK (634 aa).

The Protein kinase domain maps to 240-531 (SQPDRPIGYG…VEEALQHRYL (292 aa)). Residues 246–254 (IGYGAFGVV) and lysine 269 contribute to the ATP site. Aspartate 366 acts as the Proton acceptor in catalysis.

It belongs to the protein kinase superfamily. CMGC Ser/Thr protein kinase family. MAP kinase subfamily. Component of the beta-catenin-lit-1 complex (also called the lit-1/wrm-1 complex or the wrm-1/lit-1 kinase complex) at least composed of lit-1 and wrm-1. Interacts with wrm-1 (via N-terminus); the interaction is direct and activates lit-1 kinase activity which leads to the phosphorylation of pop-1. This promotes pop-1 interaction with par-5 and translocation of pop-1 from the nucleus to the cytoplasm. Interacts with pop-1 (when phosphorylated on 'Ser-118' and 'Ser-127'); the interaction is dependent on the beta-catenin-lit-1 complex. Requires Mg(2+) as cofactor. In terms of tissue distribution, expressed in the pharynx and seam and vulval cells.

The protein localises to the cytoplasm. The protein resides in the cell cortex. It localises to the nucleus. The catalysed reaction is L-seryl-[protein] + ATP = O-phospho-L-seryl-[protein] + ADP + H(+). The enzyme catalyses L-threonyl-[protein] + ATP = O-phospho-L-threonyl-[protein] + ADP + H(+). Has a role in the Wnt signaling pathway controlling the asymmetry of cell divisions during embryogenesis. Operates in the AB and EMS cell lineages influencing cell specification. Required for body wall muscle development, endoderm development, pop-1 asymmetry and T-cell division asymmetry. Component of the beta-catenin-lit-1 complex which promotes the phosphorylation, down-regulation and subcellular relocation of pop-1. Regulates plp-1 nuclear localization in embryos. Plays a role in male tail tip morphogenesis. The protein is Serine/threonine kinase NLK of Caenorhabditis elegans.